Reading from the N-terminus, the 234-residue chain is Large ribosomal subunit protein uL1 (234 aa).

It belongs to the universal ribosomal protein uL1 family. Part of the 50S ribosomal subunit.

Its function is as follows. Binds directly to 23S rRNA. The L1 stalk is quite mobile in the ribosome, and is involved in E site tRNA release. Protein L1 is also a translational repressor protein, it controls the translation of the L11 operon by binding to its mRNA. The sequence is that of Large ribosomal subunit protein uL1 from Salmonella arizonae (strain ATCC BAA-731 / CDC346-86 / RSK2980).